The chain runs to 154 residues: Anaerobic ribonucleoside-triphosphate reductase-activating protein (154 aa).

[4Fe-4S] cluster contacts are provided by Cys-26, Cys-30, and Cys-33. S-adenosyl-L-methionine is bound by residues 32–34 (GCY) and Gly-74.

Belongs to the organic radical-activating enzymes family. As to quaternary structure, forms a tetramer composed of two NrdD and two NrdG subunits. [4Fe-4S] cluster is required as a cofactor.

It is found in the cytoplasm. It catalyses the reaction glycyl-[protein] + reduced [flavodoxin] + S-adenosyl-L-methionine = glycin-2-yl radical-[protein] + semiquinone [flavodoxin] + 5'-deoxyadenosine + L-methionine + H(+). Functionally, activation of anaerobic ribonucleoside-triphosphate reductase under anaerobic conditions by generation of an organic free radical, using S-adenosylmethionine and reduced flavodoxin as cosubstrates to produce 5'-deoxy-adenosine. In Escherichia coli O157:H7, this protein is Anaerobic ribonucleoside-triphosphate reductase-activating protein (nrdG).